The chain runs to 355 residues: Vacuolar protein sorting-associated protein 37C (355 aa).

S29 is subject to Phosphoserine. In terms of domain architecture, VPS37 C-terminal spans 78–167; sequence VERCQEQKAK…RKPRASQELA (90 aa). The interval 159 to 355 is disordered; it reads KPRASQELAG…PPPGPAWPGY (197 aa). Pro residues-rich tracts occupy residues 170 to 186 and 194 to 205; these read APPP…PQGT and PQPPSAMPPYPL. Residues 246–257 show a composition bias toward low complexity; the sequence is PAAQPGPRGAAG. Positions 321-355 are enriched in pro residues; it reads PGQPQPSVPLQPPYPPGPAPPYGFPPPPGPAWPGY.

The protein belongs to the VPS37 family. In terms of assembly, component of the ESCRT-I complex (endosomal sorting complex required for transport I) which consists of TSG101, VPS28, a VPS37 protein (VPS37A to -D) and MVB12A or MVB12B in a 1:1:1:1 stoichiometry. Interacts with TSG101, VPS28, MVB12A and MVB12B. Component of the ESCRT-I complex (endosomal sorting complex required for transport I) which consists of TSG101, VPS28, a VPS37 protein (VPS37A to -D) and UBAP1 in a 1:1:1:1 stoichiometry. Interacts with HGS and STAM2. Interacts with CEP55. Post-translationally, phosphorylated by TBK1.

It localises to the late endosome membrane. Component of the ESCRT-I complex, a regulator of vesicular trafficking process. Required for the sorting of endocytic ubiquitinated cargos into multivesicular bodies. May be involved in cell growth and differentiation. In Pongo abelii (Sumatran orangutan), this protein is Vacuolar protein sorting-associated protein 37C (VPS37C).